Consider the following 194-residue polypeptide: Casparian strip membrane protein 2 (194 aa).

The Cytoplasmic segment spans residues 1–32 (MSTTIDIPESSKVVKGKGVVAAPLRPGGWKKG). Residues 33-53 (VAIMDFILRLGAIAAALGAAA) traverse the membrane as a helical segment. Over 54 to 82 (TMGTSDQTLPFFTQFFQFEASYDSFTTFQ) the chain is Extracellular. The helical transmembrane segment at 83–103 (FFVITMALVGGYLVLSLPFSV) threads the bilayer. The Cytoplasmic portion of the chain corresponds to 104 to 115 (VAIIRPHAVGPR). A helical transmembrane segment spans residues 116–136 (LFLIILDTVFLTLATASAASA). At 137–168 (AAVVYLAHNGDQDTNWLAICNQFGDFCAQTSS) the chain is on the extracellular side. The chain crosses the membrane as a helical span at residues 169 to 189 (AVVSSFVAVVVFVLLIVMSAL). Residues 190–194 (AMGKP) are Cytoplasmic-facing.

This sequence belongs to the Casparian strip membrane proteins (CASP) family. In terms of assembly, homodimer and heterodimers.

The protein resides in the cell membrane. In terms of biological role, regulates membrane-cell wall junctions and localized cell wall deposition. Required for establishment of the Casparian strip membrane domain (CSD) and the subsequent formation of Casparian strips, a cell wall modification of the root endodermis that determines an apoplastic barrier between the intraorganismal apoplasm and the extraorganismal apoplasm and prevents lateral diffusion. The chain is Casparian strip membrane protein 2 from Vigna unguiculata (Cowpea).